Reading from the N-terminus, the 237-residue chain is uncharacterized protein (237 aa).

It belongs to the bactofilin family.

This is an uncharacterized protein from Bacillus subtilis (strain 168).